Here is a 545-residue protein sequence, read N- to C-terminus: Arginine-containing cyclodipeptide synthase ateA (545 aa).

The segment covering 390–425 has biased composition (polar residues); the sequence is GNQQTPTQSADMDSTVSHRQQQPASSRSYTSKQNQM. The interval 390-433 is disordered; it reads GNQQTPTQSADMDSTVSHRQQQPASSRSYTSKQNQMPRPLVISV. The Conserved DDXXE motif motif lies at 434–438; the sequence is DDPSE.

It belongs to the arginine-containing cyclodipeptide synthase family.

It catalyses the reaction L-glutamyl-tRNA(Glu) + L-arginyl-tRNA(Arg) = cyclo(L-arginyl-L-glutamyl) + tRNA(Glu) + tRNA(Arg) + 2 H(+). Its pathway is secondary metabolite biosynthesis. Its function is as follows. Arginine-containing cyclodipeptide synthase; part of the cluster that mediates the biosynthesis of a highly modified cyclo-arginine-glutamate dipeptide (cRE). Within the pathway, ateA acts as the scaffold-generating enzyme and is responsible for formation of the cyclo-Arg-Glu diketopiperazine (cRW) from L-arginyl-tRNA(Arg) + L-glutamyl-tRNA(Glu). Additional enzymes from the cluster then further modify the cyclo-Arg-Glu diketopiperazine (cRW) scaffold. The protein is Arginine-containing cyclodipeptide synthase ateA of Aspergillus terreus.